Here is a 335-residue protein sequence, read N- to C-terminus: tRNA N6-adenosine threonylcarbamoyltransferase (335 aa).

The a divalent metal cation site is built by H109, H113, and Y130. Residues 130 to 134 (YVSGG), D162, G177, E181, and N266 contribute to the substrate site. Residue D294 participates in a divalent metal cation binding.

This sequence belongs to the KAE1 / TsaD family. Component of the EKC/KEOPS complex composed of at least GON7, TP53RK, TPRKB, OSGEP and LAGE3; the whole complex dimerizes. A divalent metal cation is required as a cofactor. Widely expressed at low level. Expressed at intermediate level in lung. Weakly expressed in testis, skeletal muscle, kidney, liver, spleen, brain and heart.

It localises to the cytoplasm. It is found in the nucleus. The enzyme catalyses L-threonylcarbamoyladenylate + adenosine(37) in tRNA = N(6)-L-threonylcarbamoyladenosine(37) in tRNA + AMP + H(+). Functionally, component of the EKC/KEOPS complex that is required for the formation of a threonylcarbamoyl group on adenosine at position 37 (t(6)A37) in tRNAs that read codons beginning with adenine. The complex is probably involved in the transfer of the threonylcarbamoyl moiety of threonylcarbamoyl-AMP (TC-AMP) to the N6 group of A37. OSGEP likely plays a direct catalytic role in this reaction, but requires other protein(s) of the complex to fulfill this activity. The polypeptide is tRNA N6-adenosine threonylcarbamoyltransferase (Osgep) (Mus musculus (Mouse)).